The sequence spans 547 residues: MRTPDTDEYVGKTIAYKYRVEALIGEGGMGKVFRARQLSLDKVVVLKVLRHTLLSDERTVARFQREAKAASRLNHPNSISVLDFGQAEDGALFIAMEYVAGQDLHQILSREWPLNEGRVVRIVSQVLSALSDAHGAGVIHRDLKPENIMVEPRRNEPDFVKVLDFGIAKITDSTDDGPALTRAGFVCGTPEYMSPEQARGSQLDHRSDLYAVGVILYQLMTGLLPFESDSAVGFATKHLTEEPPPPTRRRPDARISPAMERLILRALSKNPADRPASAEAFKAELQAVDKERRRMDSAPRRSANSSAVLAPLPRKSAASPQSDVRDATLPGWGNEVTMEATVRALPGVLEPLPANADAMAATRETTDSLVHTQPGAGGSSGVAFFFKSLTILLVVAALGFFAYYFFMGAGSGGAQDLPYALPTNAPVPAGANNSAVGASPDVPLYDRAIVSGARNVERALDVAREGDKALQRADVGLAATKYREAFSRSGDPELALKLGEVYWHRQNPDKEEARGWWNRHLREQPASKARALIEQRLNGAVAQPTSP.

Residues Tyr-18 to Val-288 enclose the Protein kinase domain. ATP-binding positions include Ile-24–Val-32 and Lys-47. The active-site Proton acceptor is the Asp-142. The segment covering Lys-290–Pro-299 has biased composition (basic and acidic residues). The disordered stretch occupies residues Lys-290–Ala-327.

It belongs to the protein kinase superfamily. Ser/Thr protein kinase family.

It carries out the reaction L-seryl-[protein] + ATP = O-phospho-L-seryl-[protein] + ADP + H(+). The enzyme catalyses L-threonyl-[protein] + ATP = O-phospho-L-threonyl-[protein] + ADP + H(+). The polypeptide is Serine/threonine-protein kinase pkn3 (pkn3) (Myxococcus xanthus).